A 164-amino-acid chain; its full sequence is Protein SprT (164 aa).

Positions 12–157 (CFLQAESFFK…CRRCRQTLVF (146 aa)) constitute a SprT-like domain. His-69 contacts Zn(2+). The active site involves Glu-70. Zn(2+) is bound at residue His-73.

Belongs to the SprT family. Zn(2+) serves as cofactor.

The protein localises to the cytoplasm. In Pseudomonas fluorescens (strain SBW25), this protein is Protein SprT.